The sequence spans 531 residues: RCC1 and BTB domain-containing protein 1 (531 aa).

RCC1 repeat units follow at residues 40–91 (NDEV…LLTT), 93–145 (DGVV…ALAA), 147–198 (GELF…AVLD), 199–250 (SGEV…ALTD), 252–302 (GLLY…AAKT), and 304–356 (GGHV…FLTV). BTB domains follow at residues 370-437 (ADLK…DLPP) and 470-499 (ENAF…INHL).

In the retina, mainly expressed in the inner retina with strong signals reaching up to the outer plexiform layer (at protein level).

It localises to the nucleus. In terms of biological role, may be involved in cell cycle regulation by chromatin remodeling. The chain is RCC1 and BTB domain-containing protein 1 (Rcbtb1) from Mus musculus (Mouse).